Here is a 498-residue protein sequence, read N- to C-terminus: Oligopeptide transport system permease protein AmiC (498 aa).

Transmembrane regions (helical) follow at residues 12–32 (SLVSIFLVTTLTYTIIYTLVP), 279–299 (MIVSSAITGLIGLVLAYALAV), 316–336 (LSTGALTFLLALPTIALVYIV), 359–379 (SYVLPAVILGLLGAPGTAIWI), 415–435 (MVPLVSGIPAAIIGVIGGATL), and 461–481 (VVGLVFIFTCISIFSRLLGDI). The ABC transmembrane type-1 domain maps to 280–479 (IVSSAITGLI…CISIFSRLLG (200 aa)).

The protein belongs to the binding-protein-dependent transport system permease family. OppBC subfamily.

Its subcellular location is the cell membrane. Functionally, part of the binding-protein-dependent transport system for oligopeptides; probably responsible for the translocation of the substrate across the membrane. The polypeptide is Oligopeptide transport system permease protein AmiC (amiC) (Streptococcus pneumoniae serotype 4 (strain ATCC BAA-334 / TIGR4)).